We begin with the raw amino-acid sequence, 546 residues long: Chaperonin GroEL (546 aa).

ATP contacts are provided by residues 30–33 (TLGP), lysine 51, 87–91 (DGTTT), glycine 415, 479–481 (NAA), and aspartate 495.

This sequence belongs to the chaperonin (HSP60) family. As to quaternary structure, forms a cylinder of 14 subunits composed of two heptameric rings stacked back-to-back. Interacts with the co-chaperonin GroES.

The protein resides in the cytoplasm. It catalyses the reaction ATP + H2O + a folded polypeptide = ADP + phosphate + an unfolded polypeptide.. Together with its co-chaperonin GroES, plays an essential role in assisting protein folding. The GroEL-GroES system forms a nano-cage that allows encapsulation of the non-native substrate proteins and provides a physical environment optimized to promote and accelerate protein folding. In Pseudomonas putida (strain W619), this protein is Chaperonin GroEL.